The chain runs to 286 residues: Beta-lactamase SHV-13 (286 aa).

The signal sequence occupies residues 1–21; it reads MRYIRLCIISLLATLPLAVHA. Residue S66 is the Acyl-ester intermediate of the active site. An intrachain disulfide couples C73 to C119. Catalysis depends on E164, which acts as the Proton acceptor. 230 to 232 contacts substrate; the sequence is KTG.

Belongs to the class-A beta-lactamase family.

The enzyme catalyses a beta-lactam + H2O = a substituted beta-amino acid. Its activity is regulated as follows. Inhibited 16-fold better by the beta-lactamase inhibitor clavulanic acid than by tazobactam. Broad spectrum beta-lactamase which hydrolyzes penicillins, as well as cephalosporins except cephamycins. Also hydrolyzes aztreonam, but not imipenem. Confers highly resistance to ceftazidime, cefotaxime, aztreonam and piperacillin. This Klebsiella pneumoniae protein is Beta-lactamase SHV-13 (bla).